A 251-amino-acid polypeptide reads, in one-letter code: NADPH-dependent oxidoreductase (251 aa).

This sequence belongs to the flavin oxidoreductase frp family. Requires FMN as cofactor.

Its function is as follows. Reduces FMN, organic nitro compounds and disulfide DTNB. Involved in maintenance of the cellular redox state and the disulfide stress response. This chain is NADPH-dependent oxidoreductase (nfrA), found in Staphylococcus epidermidis (strain ATCC 12228 / FDA PCI 1200).